A 137-amino-acid polypeptide reads, in one-letter code: Large ribosomal subunit protein uL16 (137 aa).

Residues 1 to 16 (MLQPKRTKFRKMQKGR) show a composition bias toward basic residues. The segment at 1–22 (MLQPKRTKFRKMQKGRIRGEAK) is disordered.

It belongs to the universal ribosomal protein uL16 family. As to quaternary structure, part of the 50S ribosomal subunit.

Functionally, binds 23S rRNA and is also seen to make contacts with the A and possibly P site tRNAs. In Jannaschia sp. (strain CCS1), this protein is Large ribosomal subunit protein uL16.